The primary structure comprises 95 residues: Small ribosomal subunit protein uS15 (95 aa).

The protein belongs to the universal ribosomal protein uS15 family. As to quaternary structure, part of the 30S ribosomal subunit. Forms a bridge to the 50S subunit in the 70S ribosome, contacting the 23S rRNA.

Functionally, one of the primary rRNA binding proteins, it binds directly to 16S rRNA where it helps nucleate assembly of the platform of the 30S subunit by binding and bridging several RNA helices of the 16S rRNA. In terms of biological role, forms an intersubunit bridge (bridge B4) with the 23S rRNA of the 50S subunit in the ribosome. This Streptomyces coelicolor (strain ATCC BAA-471 / A3(2) / M145) protein is Small ribosomal subunit protein uS15.